The following is a 275-amino-acid chain: 2-dehydro-3-deoxyphosphooctonate aldolase (275 aa).

This sequence belongs to the KdsA family.

The protein localises to the cytoplasm. The catalysed reaction is D-arabinose 5-phosphate + phosphoenolpyruvate + H2O = 3-deoxy-alpha-D-manno-2-octulosonate-8-phosphate + phosphate. It functions in the pathway carbohydrate biosynthesis; 3-deoxy-D-manno-octulosonate biosynthesis; 3-deoxy-D-manno-octulosonate from D-ribulose 5-phosphate: step 2/3. It participates in bacterial outer membrane biogenesis; lipopolysaccharide biosynthesis. The protein is 2-dehydro-3-deoxyphosphooctonate aldolase of Francisella tularensis subsp. mediasiatica (strain FSC147).